Reading from the N-terminus, the 533-residue chain is Light-independent protochlorophyllide reductase subunit B (533 aa).

Asp-36 serves as a coordination point for [4Fe-4S] cluster. Asp-292 (proton donor) is an active-site residue. A substrate-binding site is contributed by 428-429 (GL).

Belongs to the ChlB/BchB/BchZ family. As to quaternary structure, protochlorophyllide reductase is composed of three subunits; BchL, BchN and BchB. Forms a heterotetramer of two BchB and two BchN subunits. It depends on [4Fe-4S] cluster as a cofactor.

It catalyses the reaction chlorophyllide a + oxidized 2[4Fe-4S]-[ferredoxin] + 2 ADP + 2 phosphate = protochlorophyllide a + reduced 2[4Fe-4S]-[ferredoxin] + 2 ATP + 2 H2O. Its pathway is porphyrin-containing compound metabolism; bacteriochlorophyll biosynthesis (light-independent). In terms of biological role, component of the dark-operative protochlorophyllide reductase (DPOR) that uses Mg-ATP and reduced ferredoxin to reduce ring D of protochlorophyllide (Pchlide) to form chlorophyllide a (Chlide). This reaction is light-independent. The NB-protein (BchN-BchB) is the catalytic component of the complex. The protein is Light-independent protochlorophyllide reductase subunit B of Prosthecochloris aestuarii (strain DSM 271 / SK 413).